Consider the following 321-residue polypeptide: MKHIPVLEDGPWKTVCVKELNGLKKLKRKGKEPARRANGYKTFRLDLEAPEPRAVATNGLRDRTHRLQPVPVPVPVPVPVAPAVPPRGGTDTAGERGGSRAPEVSDARKRCFALGAVGPGLPTPPPPPPPAPQSQAPGGPEAQPFREPGLRPRILLCAPPARPAPSAPPAPPAPPESTVRPAPPTRPGESSYSSISHVIYNNHQDSSASPRKRPGEATAASSEIKALQQTRRLLANARERTRVHTISAAFEALRKQVPCYSYGQKLSKLAILRIACNYILSLARLADLDYSADHSNLSFSECVQRCTRTLQAEGRAKKRKE.

2 disordered regions span residues 59 to 193 (GLRD…SSYS) and 203 to 222 (HQDS…AASS). The span at 70 to 85 (VPVPVPVPVPVAPAVP) shows a compositional bias: pro residues. Residues 93–109 (AGERGGSRAPEVSDARK) show a composition bias toward basic and acidic residues. The segment covering 121 to 132 (LPTPPPPPPPAP) has biased composition (pro residues). Positions 133–143 (QSQAPGGPEAQ) are enriched in low complexity. Residues 160 to 186 (PARPAPSAPPAPPAPPESTVRPAPPTR) are compositionally biased toward pro residues. Positions 230 to 243 (TRRLLANARERTRV) are basic motif; degenerate. The bHLH domain occupies 230–282 (TRRLLANARERTRVHTISAAFEALRKQVPCYSYGQKLSKLAILRIACNYILSL). Residues 244–282 (HTISAAFEALRKQVPCYSYGQKLSKLAILRIACNYILSL) form a helix-loop-helix motif region.

In terms of assembly, efficient DNA binding requires dimerization with another bHLH protein. Interacts with NEUROG3 and NEUROD1. Interacts with ZFPM2; mediates indirect interaction with GATA4. Forms a heterodimer with TCF3; repress transcription of TCF3 and TCF3/NEUROG3 dimer-induced transactivation of E box-dependent promoters. In terms of tissue distribution, expressed in lung, liver, kidney, heart and pancreas. Expressed in endothel of umbilical vessels.

It localises to the nucleus. It is found in the nucleus speckle. The protein resides in the cytoplasm. Transcription factor that binds a palindromic (canonical) core consensus DNA sequence 5'-CANNTG- 3' known as an E-box element, possibly as a heterodimer with other bHLH proteins. Regulates endothelial cell proliferation, migration and tube-like structures formation. Modulates endothelial cell differentiation through NOS3. May be implicated in specification and differentiation of neuronal cell lineages in the brain. May participate in kidney development and may be involved in podocyte differentiation. During early embryonic development is involved in tissue-specific differentiation processes that are dependent on class II bHLH factors and namely modulates the differentiation program initiated by the pro-endocrine factor NEUROG3. During myogenesis, may play a role during the transition of myoblasts from the proliferative phase to the differentiation phase. Positively regulates HAMP transcription in two ways, firstly by acting directly on the HAMP promoter via E-boxes binding and indirectly through increased phosphorylation of SMAD protein complex. Repress NEUROG3-dependent gene activation in a gene-specific manner through at least two mechanisms; requires only either the sequestering of a general partner such as TCF3 through heterodimerization, either also requires binding of the bHLH domain to DNA via a basic motif. In Homo sapiens (Human), this protein is Transcription factor ATOH8.